Here is a 61-residue protein sequence, read N- to C-terminus: Large ribosomal subunit protein uL30 (61 aa).

The protein belongs to the universal ribosomal protein uL30 family. As to quaternary structure, part of the 50S ribosomal subunit.

This Exiguobacterium sp. (strain ATCC BAA-1283 / AT1b) protein is Large ribosomal subunit protein uL30.